Consider the following 146-residue polypeptide: MFANAGLSPFVAIWTARAASLYTSHNFWCAAAVSAAVYVGSAVVPAAVAGPLFVGRVSATIKAAAPSTTAAIATLATAANGQLRERGGAGGWVGVHCPVVGGGGVGHPRKAIAAAVSVHSTCMPAAFGGHLGLGDRSRSVSLSGTP.

4 helical membrane-spanning segments follow: residues 1–21 (MFANAGLSPFVAIWTARAASL), 35–55 (AAVYVGSAVVPAAVAGPLFVG), 87–107 (GGAGGWVGVHCPVVGGGGVGH), and 111–131 (AIAAAVSVHSTCMPAAFGGHL).

It localises to the cell membrane. This is an uncharacterized protein from Mycobacterium tuberculosis (strain CDC 1551 / Oshkosh).